Consider the following 501-residue polypeptide: MAINAQEISALIKKQIEDFQPNFDVTETGIVTYIGDGIARARGLDNAMSGELLEFSNGAYGMAQNLESNDVGIIILGDFSEIREGDVVKRTGKIMEVPVGEAMIGRVVNPLGQPVDGLGEIETTATRPVETPAPGVMQRKSVFEPLQTGLKAIDALVPIGRGQRELIIGDRQTGKTSVAIDAILNQKGQDMICIYVAIGQKESTVRTQVETLRKYGALDYTIVVTASASQPSPLLFIAPYAGVAMAEEFMYNGKHVLIVYDDLSKQAVAYRELSLLLRRPPGREAYPGDVFYLHSRLLERSAKLSDALGGGSITALPFIETQAGDISAYIATNVISITDGQIFLQENLFNSGIRPAIDAGSSVSRVGGAAQIKAMKRVAGTLRLDLASYRELEAFTQFGSDLDAATQAKLNRGRRTVEVLKQPLHKPLPVEKQVVILYALTHGFLDDVPVNDILAFEEALYDYFDAHYDNLFETIRTTKDLPEEAELDAAIQAFKDQSQFK.

Position 169-176 (169-176) interacts with ATP; sequence GDRQTGKT.

Belongs to the ATPase alpha/beta chains family. F-type ATPases have 2 components, CF(1) - the catalytic core - and CF(0) - the membrane proton channel. CF(1) has five subunits: alpha(3), beta(3), gamma(1), delta(1), epsilon(1). CF(0) has three main subunits: a(1), b(2) and c(9-12). The alpha and beta chains form an alternating ring which encloses part of the gamma chain. CF(1) is attached to CF(0) by a central stalk formed by the gamma and epsilon chains, while a peripheral stalk is formed by the delta and b chains.

Its subcellular location is the cell membrane. The catalysed reaction is ATP + H2O + 4 H(+)(in) = ADP + phosphate + 5 H(+)(out). Functionally, produces ATP from ADP in the presence of a proton gradient across the membrane. The alpha chain is a regulatory subunit. This Streptococcus agalactiae serotype III (strain NEM316) protein is ATP synthase subunit alpha.